We begin with the raw amino-acid sequence, 91 residues long: uncharacterized protein (91 aa).

It localises to the plastid. It is found in the chloroplast. This is an uncharacterized protein from Phalaenopsis aphrodite subsp. formosana (Moth orchid).